A 378-amino-acid polypeptide reads, in one-letter code: Small ribosomal subunit protein bS1 (378 aa).

5 consecutive S1 motif domains span residues 1–66 (ETVT…VSRR), 87–155 (GMEV…LGLK), 172–242 (GTKL…LGLK), 259–329 (GDRV…LGVK), and 346–378 (GAIV…ASEA).

The protein belongs to the bacterial ribosomal protein bS1 family.

In terms of biological role, binds mRNA; thus facilitating recognition of the initiation point. It is needed to translate mRNA with a short Shine-Dalgarno (SD) purine-rich sequence. This Providencia sp protein is Small ribosomal subunit protein bS1 (rpsA).